Here is a 370-residue protein sequence, read N- to C-terminus: Putative agmatine deiminase (370 aa).

Residues 1-19 (MTNMNVDATQLTTKPSQDG) are compositionally biased toward polar residues. Residues 1–20 (MTNMNVDATQLTTKPSQDGF) are disordered. The Amidino-cysteine intermediate role is filled by C361.

It belongs to the agmatine deiminase family.

It carries out the reaction agmatine + H2O = N-carbamoylputrescine + NH4(+). This is Putative agmatine deiminase from Shewanella frigidimarina (strain NCIMB 400).